Consider the following 192-residue polypeptide: Segregation and condensation protein B (192 aa).

This sequence belongs to the ScpB family. As to quaternary structure, homodimer. Homodimerization may be required to stabilize the binding of ScpA to the Smc head domains. Component of a cohesin-like complex composed of ScpA, ScpB and the Smc homodimer, in which ScpA and ScpB bind to the head domain of Smc. The presence of the three proteins is required for the association of the complex with DNA.

It localises to the cytoplasm. In terms of biological role, participates in chromosomal partition during cell division. May act via the formation of a condensin-like complex containing Smc and ScpA that pull DNA away from mid-cell into both cell halves. The protein is Segregation and condensation protein B of Mycoplasma mobile (strain ATCC 43663 / 163K / NCTC 11711) (Mesomycoplasma mobile).